Here is a 260-residue protein sequence, read N- to C-terminus: Purine nucleoside phosphorylase PD_1754 (260 aa).

Histidine 79, cysteine 120, and histidine 137 together coordinate Zn(2+).

The protein belongs to the purine nucleoside phosphorylase YfiH/LACC1 family. As to quaternary structure, homodimer. Requires Cu(2+) as cofactor. Zn(2+) serves as cofactor.

The catalysed reaction is adenosine + phosphate = alpha-D-ribose 1-phosphate + adenine. It carries out the reaction S-methyl-5'-thioadenosine + phosphate = 5-(methylsulfanyl)-alpha-D-ribose 1-phosphate + adenine. The enzyme catalyses inosine + phosphate = alpha-D-ribose 1-phosphate + hypoxanthine. It catalyses the reaction adenosine + H2O + H(+) = inosine + NH4(+). In terms of biological role, purine nucleoside enzyme that catalyzes the phosphorolysis of adenosine and inosine nucleosides, yielding D-ribose 1-phosphate and the respective free bases, adenine and hypoxanthine. Also catalyzes the phosphorolysis of S-methyl-5'-thioadenosine into adenine and S-methyl-5-thio-alpha-D-ribose 1-phosphate. Also has adenosine deaminase activity. The sequence is that of Purine nucleoside phosphorylase PD_1754 from Xylella fastidiosa (strain Temecula1 / ATCC 700964).